Reading from the N-terminus, the 248-residue chain is tRNA pseudouridine synthase A (248 aa).

D53 functions as the Nucleophile in the catalytic mechanism. Residue Y111 participates in substrate binding.

The protein belongs to the tRNA pseudouridine synthase TruA family. In terms of assembly, homodimer.

It catalyses the reaction uridine(38/39/40) in tRNA = pseudouridine(38/39/40) in tRNA. In terms of biological role, formation of pseudouridine at positions 38, 39 and 40 in the anticodon stem and loop of transfer RNAs. This chain is tRNA pseudouridine synthase A, found in Listeria monocytogenes serotype 4b (strain CLIP80459).